The sequence spans 757 residues: 5-methyltetrahydropteroyltriglutamate--homocysteine methyltransferase (757 aa).

Residues 16 to 19 (RELK) and K112 contribute to the 5-methyltetrahydropteroyltri-L-glutamate site. Residues 433-435 (IGS) and E486 contribute to the L-homocysteine site. L-methionine is bound by residues 433–435 (IGS) and E486. 5-methyltetrahydropteroyltri-L-glutamate contacts are provided by residues 517-518 (RC) and W563. D601 contacts L-homocysteine. L-methionine is bound at residue D601. E607 serves as a coordination point for 5-methyltetrahydropteroyltri-L-glutamate. Residues H643, C645, and E667 each contribute to the Zn(2+) site. The active-site Proton donor is the H696. C728 contacts Zn(2+).

This sequence belongs to the vitamin-B12 independent methionine synthase family. Zn(2+) is required as a cofactor.

The catalysed reaction is 5-methyltetrahydropteroyltri-L-glutamate + L-homocysteine = tetrahydropteroyltri-L-glutamate + L-methionine. It functions in the pathway amino-acid biosynthesis; L-methionine biosynthesis via de novo pathway; L-methionine from L-homocysteine (MetE route): step 1/1. Functionally, catalyzes the transfer of a methyl group from 5-methyltetrahydrofolate to homocysteine resulting in methionine formation. This chain is 5-methyltetrahydropteroyltriglutamate--homocysteine methyltransferase, found in Pasteurella multocida (strain Pm70).